A 419-amino-acid chain; its full sequence is Synaptotagmin-1 (419 aa).

Residues methionine 1–proline 57 are Vesicular-facing. Asparagine 25 carries an N-linked (GlcNAc...) asparagine glycan. A helical membrane pass occupies residues proline 58–cysteine 80. 5 S-palmitoyl cysteine lipidation sites follow: cysteine 75, cysteine 76, cysteine 78, cysteine 80, and cysteine 83. Topologically, residues lysine 81–lysine 419 are cytoplasmic. Residues lysine 108 to lysine 139 form a disordered region. Residues glutamine 117–lysine 131 show a composition bias toward acidic residues. Residue threonine 126 is modified to Phosphothreonine. The tract at residues glutamate 133–asparagine 379 is phospholipid binding. Residues lysine 139–arginine 258 enclose the C2 1 domain. Ca(2+) contacts are provided by leucine 169, aspartate 170, and aspartate 176. Phosphotyrosine is present on tyrosine 227. The Ca(2+) site is built by aspartate 228, phenylalanine 229, aspartate 230, serine 233, lysine 234, and aspartate 236. Residue serine 262 is modified to Phosphoserine. One can recognise a C2 2 domain in the interval lysine 270–histidine 403. 2 residues coordinate Ca(2+): aspartate 301 and aspartate 307. Phosphoserine occurs at positions 340 and 342. 3 residues coordinate Ca(2+): aspartate 361, aspartate 363, and aspartate 369.

This sequence belongs to the synaptotagmin family. Homotetramer. Heterodimer; heterodimerizes with SYT2 in presence of calcium. Interacts with SCAMP5. Interacts with STON2. Forms a complex with SV2B, syntaxin 1 and SNAP25. Interacts with SV2A, SV2B and SV2C. Interacts with RIMS1. Interacts with PRRT2. Interacts with DNAJC5 in a phosphorylation-dependent manner. Interacts (via N-terminus) with RAB3A. Interacts with SYT12. Interacts with calmodulin. Interacts with DNM1 (via C-terminal proline-rich domain (PRD)); this interaction facilitates vesicle fission during clathrin-mediated endocytosis (CME). It depends on Ca(2+) as a cofactor. Post-translationally, glycosylated.

It is found in the cytoplasmic vesicle. It localises to the secretory vesicle membrane. The protein resides in the secretory vesicle. Its subcellular location is the synaptic vesicle membrane. The protein localises to the chromaffin granule membrane. It is found in the cytoplasm. Its function is as follows. Calcium sensor that participates in triggering neurotransmitter release at the synapse. May have a regulatory role in the membrane interactions during trafficking of synaptic vesicles at the active zone of the synapse. It binds acidic phospholipids with a specificity that requires the presence of both an acidic head group and a diacyl backbone. A Ca(2+)-dependent interaction between synaptotagmin and putative receptors for activated protein kinase C has also been reported. It can bind to at least three additional proteins in a Ca(2+)-independent manner; these are neurexins, syntaxin and AP2. Plays a role in dendrite formation by melanocytes. The sequence is that of Synaptotagmin-1 from Macaca fascicularis (Crab-eating macaque).